Here is a 544-residue protein sequence, read N- to C-terminus: Major royal jelly protein 3 (544 aa).

The signal sequence occupies residues 1–20 (MTKWLLLVVCLGIACQDVTS). N183 is a glycosylation site (N-linked (GlcNAc...) asparagine). Residues 421-544 (RYHNQNAGNQ…NQVHHSSKLH (124 aa)) are disordered. 20 consecutive repeat copies span residues 424-428 (NQNAG), 429-433 (NQNAD), 434-438 (NQNAD), 439-443 (NQNAN), 444-448 (NQNAD), 449-453 (NQNAN), 454-458 (KQNGN), 459-463 (RQNDN), 464-468 (RQNDN), 469-473 (KQNGN), 474-478 (RQNDN), 479-483 (KQNGN), 484-488 (RQNDN), 489-493 (KQNGN), 494-498 (RQNGN), 499-503 (KQNDN), 504-508 (KQNGN), 509-513 (RQNDN), 514-518 (KRNGN), and 519-523 (RQNDN). Composition is skewed to low complexity over residues 424–460 (NQNA…GNRQ), 468–510 (NKQN…GNRQ), and 518–530 (NRQN…QNDN). The 23 X 5 AA tandem repeats of [NKR]-[RQ]-N-[AGD]-[DNG] stretch occupies residues 424 to 523 (NQNAGNQNAD…KRNGNRQNDN (100 aa)). The stretch at 524 to 525 (QN) is one 21; half-length repeat. 2 consecutive repeat copies span residues 526–530 (NQNDN) and 531–535 (NRNDN).

The protein belongs to the major royal jelly protein family. In terms of assembly, homoligomer; in the absence of RNA, assembles into a higher-order oligomeric form, composed of around 20 monomer units. In terms of tissue distribution, found in and secreted from the hypopharyngeal glands of the worker honey bee (at protein level); expression peaks at 12 days post eclosion. Expressed in the brains of worker bees. Expressed in the brains of adult worker bees peaking at 12 days post eclosion (at protein level). Expressed in the spermatheca of adult queen bees (at protein level); Expression levels are higher in mated queens than in virgin queens. Expressed in queen bee ovaries and male drone testes. Expression in the head of forager worker bees is lower than in the heads of nurse worker bees.

Its subcellular location is the secreted. In terms of biological role, abundant protein component of royal jelly, a substance produced in the hypopharyngeal gland containing proteins, free amino acids, fatty acids, sugars and other nutrients, which is fed to developing larvae by worker nurse bees. Major royal jelly proteins (MRJPs) are high in essential amino acids and probably have a nutritional function in larval food. All larvae are fed some royal jelly (also known as worker jelly) early in their development but it forms the principal source of nutrition for larvae destined to become queen bees. Secreted RNA-binding protein required to concentrate, stabilize and enhance environmental RNA bioavailability in the honey bee royal jelly. Acts as a RNA-aggregating protein: binds 18 nucleotides and longer single- and double-stranded RNA (ssRNA and dsRNA, respectively) in a non-specific manner. RNA-binding drives super-order assembly of oligomers into extracellular ribonucleoprotein granules that concentrate, protect and enhance RNA uptake granules, facilitating RNA transfer among bees. Produced in the spermatheca of adult queen bees, along with other major royal jelly proteins, where it may act as a nutrient supply for sperm stored by mated queens, or be involved in energy metabolism. This chain is Major royal jelly protein 3, found in Apis mellifera (Honeybee).